A 134-amino-acid chain; its full sequence is FK506-binding protein 2 (134 aa).

Residues 1–19 (MRFSIFSTLLVSLATLSTA) form the signal peptide. The PPIase FKBP-type domain occupies 39–127 (GDTVQMHYKG…IFETELVGID (89 aa)). A Prevents secretion from ER motif is present at residues 131–134 (KDEL).

Belongs to the FKBP-type PPIase family. FKBP2 subfamily.

Its subcellular location is the endoplasmic reticulum. The catalysed reaction is [protein]-peptidylproline (omega=180) = [protein]-peptidylproline (omega=0). Inhibited by both FK506 and rapamycin. Its function is as follows. PPIases accelerate the folding of proteins. It catalyzes the cis-trans isomerization of proline imidic peptide bonds in oligopeptides. This Aspergillus oryzae (strain ATCC 42149 / RIB 40) (Yellow koji mold) protein is FK506-binding protein 2 (fpr2).